Reading from the N-terminus, the 434-residue chain is Serine/threonine-protein kinase Sgk1-A (434 aa).

Positions Pro66–Pro94 are disordered. Over residues Gln84–Pro94 the composition is skewed to polar residues. The Protein kinase domain maps to Phe101–Phe358. Residues Ile107–Val115 and Lys130 contribute to the ATP site. Catalysis depends on Asp225, which acts as the Proton acceptor. One can recognise an AGC-kinase C-terminal domain in the interval Ser359–Leu434.

The protein belongs to the protein kinase superfamily. AGC Ser/Thr protein kinase family.

It localises to the cytoplasm. The protein localises to the nucleus. It is found in the endoplasmic reticulum. The catalysed reaction is L-seryl-[protein] + ATP = O-phospho-L-seryl-[protein] + ADP + H(+). It carries out the reaction L-threonyl-[protein] + ATP = O-phospho-L-threonyl-[protein] + ADP + H(+). In terms of biological role, protein kinase that may play an important role in cellular stress response. Plays an important role in activating certain potassium, sodium, and chloride channels, suggesting an involvement in the regulation of processes such as cell survival, neuronal excitability, and renal sodium excretion. The sequence is that of Serine/threonine-protein kinase Sgk1-A (sgk1-a) from Xenopus laevis (African clawed frog).